A 529-amino-acid chain; its full sequence is Cytochrome P450 monooxygenase 136 (529 aa).

The chain crosses the membrane as a helical span at residues Ser-9–Tyr-29. Position 447 (Cys-447) interacts with heme.

The protein belongs to the cytochrome P450 family. It depends on heme as a cofactor.

The protein resides in the membrane. Its pathway is secondary metabolite biosynthesis. In terms of biological role, cytochrome P450 monooxygenase that is able to use delta(6)-protoilludene as a substrate to produce delta(6)-protoilludene-5-ol. The chain is Cytochrome P450 monooxygenase 136 from Postia placenta (strain ATCC 44394 / Madison 698-R) (Brown rot fungus).